Here is a 715-residue protein sequence, read N- to C-terminus: Macrolide export ATP-binding/permease protein MacB (715 aa).

The region spanning 4 to 245 is the ABC transporter domain; it reads IELQDIRKTY…VSKAAPAQSK (242 aa). 40-47 is an ATP binding site; it reads GTSGSGKT. Positions 229–251 are disordered; it reads AVGDMPQVSKAAPAQSKPVHSAM. 4 helical membrane-spanning segments follow: residues 277-297, 592-612, 639-659, and 681-701; these read AALTTLGIIIGVAAVIAMMEI, LLLAVALISLIVGGVGIMNIM, QFLFEAVLLCFLGGAVGILVG, and ILAAVGVSATVGIVFGYYPAW.

This sequence belongs to the ABC transporter superfamily. Macrolide exporter (TC 3.A.1.122) family. Homodimer.

The protein localises to the cell inner membrane. Functionally, non-canonical ABC transporter that contains transmembrane domains (TMD), which form a pore in the inner membrane, and an ATP-binding domain (NBD), which is responsible for energy generation. Confers resistance against macrolides. In Syntrophobacter fumaroxidans (strain DSM 10017 / MPOB), this protein is Macrolide export ATP-binding/permease protein MacB.